A 332-amino-acid polypeptide reads, in one-letter code: UPF0194 membrane protein YbhG (332 aa).

The N-terminal stretch at methionine 1–tyrosine 26 is a signal peptide. The stretch at glutamate 108–alanine 209 forms a coiled coil.

It belongs to the UPF0194 family.

The protein localises to the periplasm. The protein is UPF0194 membrane protein YbhG (ybhG) of Shigella sonnei (strain Ss046).